The sequence spans 66 residues: Photosystem II reaction center protein J (66 aa).

The segment at methionine 1–lysine 27 is disordered. The helical transmembrane segment at leucine 37–tyrosine 57 threads the bilayer.

The protein belongs to the PsbJ family. As to quaternary structure, PSII is composed of 1 copy each of membrane proteins PsbA, PsbB, PsbC, PsbD, PsbE, PsbF, PsbH, PsbI, PsbJ, PsbK, PsbL, PsbM, PsbT, PsbX, PsbY, PsbZ, Psb30/Ycf12, peripheral proteins PsbO, CyanoQ (PsbQ), PsbU, PsbV and a large number of cofactors. It forms dimeric complexes.

Its subcellular location is the cellular thylakoid membrane. Its function is as follows. One of the components of the core complex of photosystem II (PSII). PSII is a light-driven water:plastoquinone oxidoreductase that uses light energy to abstract electrons from H(2)O, generating O(2) and a proton gradient subsequently used for ATP formation. It consists of a core antenna complex that captures photons, and an electron transfer chain that converts photonic excitation into a charge separation. The protein is Photosystem II reaction center protein J of Synechococcus sp. (strain RCC307).